We begin with the raw amino-acid sequence, 343 residues long: Phosphate acyltransferase (343 aa).

This sequence belongs to the PlsX family. Homodimer. Probably interacts with PlsY.

The protein resides in the cytoplasm. It carries out the reaction a fatty acyl-[ACP] + phosphate = an acyl phosphate + holo-[ACP]. It participates in lipid metabolism; phospholipid metabolism. Catalyzes the reversible formation of acyl-phosphate (acyl-PO(4)) from acyl-[acyl-carrier-protein] (acyl-ACP). This enzyme utilizes acyl-ACP as fatty acyl donor, but not acyl-CoA. The polypeptide is Phosphate acyltransferase (Acidovorax sp. (strain JS42)).